The primary structure comprises 547 residues: MSKFGLKNTPQWQGLEKNYREIKKIHLRELFKDENRFNKFSIRDNDLGITFDYSKNIINSDTFKLLIEFVKAAKVTEYAKKMFSGEKINWTEKRAVLHTALRNRSNMPIYVNGKDVMPEIKAVLKKMENFSNDLRSGKWVGATGKKVTDVVNIGIGGSDLGPKMVCESLKYYADGPNVYFVSNIDGADIYEVLKKLNPGTTLFIVASKTFTTLETITNALTARKWLTDKLGDKAVANHFVALSTNVKKVKEFGIDENNMFEFWSFVGGRYSLWSAIGLPIACYVGFDKFIELLDGAYYIDQHFLNAPYEKNIPVIMAALGVWYNNFWGASSHAVLPYSQYLNKFPAYLQQGDMESNGKTINFEGRRVDYGTGPIIWGESGTNGQHSFYQLIHQGTKFIPCDFIGFVNPPEKIGDHHEKLMANYFAQTEALAFGLTKEEVAKNLKKAGISPADIKILTPHKIFEGNKPTNSILFDELTPRTLGALIALYEHKIFTQGIMWRINSFDQWGVELGKVLANVILPELKGQTDNKHDNSTKNLIKIFNSNKK.

Glu354 (proton donor) is an active-site residue. Residues His385 and Lys513 contribute to the active site.

The protein belongs to the GPI family.

The protein resides in the cytoplasm. It carries out the reaction alpha-D-glucose 6-phosphate = beta-D-fructose 6-phosphate. Its pathway is carbohydrate biosynthesis; gluconeogenesis. The protein operates within carbohydrate degradation; glycolysis; D-glyceraldehyde 3-phosphate and glycerone phosphate from D-glucose: step 2/4. Its function is as follows. Catalyzes the reversible isomerization of glucose-6-phosphate to fructose-6-phosphate. In Endomicrobium trichonymphae, this protein is Glucose-6-phosphate isomerase.